Consider the following 280-residue polypeptide: Rhomboid-like protein 11, chloroplastic (280 aa).

Residues 1–57 (MSQLLHLHRLSLPQSSLRFRFPPLHRRRAASSPTNSTQPPLQFRPLTVSRSQITCRF) constitute a chloroplast transit peptide. At 58-82 (SQSDITPQFELDKAKDNRKPQKRAN) the chain is on the stromal side. A helical transmembrane segment spans residues 83-103 (GIFWIILINLGIYLADHFFQV). Topologically, residues 104 to 117 (RGIKSLYLYHNFPA) are chloroplast intermembrane. Residues 118 to 140 (WYQFVTATFCHANWNHLSSNLFF) traverse the membrane as a helical segment. Residues 141-154 (LYIFGKLVEEEEGN) lie on the Stromal side of the membrane. Residues 155–175 (FGLWLSYLFTGVGANLVSWLV) traverse the membrane as a helical segment. Residues 176 to 178 (LPR) are Chloroplast intermembrane-facing. The helical transmembrane segment at 179–199 (NAVSVGASGAVFGLFAISVLV) threads the bilayer. Catalysis depends on S186, which acts as the Nucleophile. The Stromal segment spans residues 200–243 (KMSWDWRKILEVLILGQFVIERVMEAAQASAGLSGTIYGGYSLQ). The helical transmembrane segment at 244–264 (TVNHIAHLSGALVGVVLVWLL) threads the bilayer. H250 functions as the Charge relay system in the catalytic mechanism. At 265 to 280 (SKFPSASMDQDVKKSS) the chain is on the chloroplast intermembrane side.

It belongs to the peptidase S54 family. As to quaternary structure, homooligomer.

The protein localises to the plastid. Its subcellular location is the chloroplast inner membrane. Its function is as follows. Rhomboid-type serine protease that catalyzes intramembrane proteolysis. May be involved in TIC22 processing during its import. This is Rhomboid-like protein 11, chloroplastic from Arabidopsis thaliana (Mouse-ear cress).